The following is a 739-amino-acid chain: MKEMSANTMLDSQRQQKHYGITSPISLACPKEIDHIYTQKLIDAMKPFGVFEDEEELNHRLVVLGKLNNLVKEWISDISESKNLPPSVVATVGGKIFTFGSYRLGVHTKGADIDALCVAPRHVERSDFFQSFFEKLKHQDGIRNLRAVEDAFVPVIKFEFDGIEIDLVFARLAIQTISDNLDLRDDSRLRSLDIRCIRSLNGCRVTDEILHLVPNKETFRLTLRAVKLWAKRRGIYSNMLGFLGGVSWAMLVARTCQLYPNAAASTLVHKFFLVFSKWEWPNPVLLKQPEESNLNLPVWDPRVNPSDRYHLMPIITPAYPQQNSTYNVSTSTRTVMVEEFKQGLAVTDEILQGKSDWSKLLEPPNFFQKYRHYIVLTASASTEENHLEWVGLVESKIRVLVGNLERNEFITLAHVNPQSFPGNKEHHKANNYVSMWFLGIIFRRVENAESVNIDLTYDIQSFTDTVYRQANNINMLKDGMKIEATHVKKKQLHHYLPAEILQKKKKSLSDVSRSSGGLQSKRSSLDSTCLDSSRDTDSGTPFNSPVSANKPSNPDSPTGEIERSSAEPVAVVVEKLPSVPPAQGLSIPVIGAKVDPTAKAVSSPAVCTIPTVVGRNVIPRITTPHNPVQGQPHLNGISNITKNVTPKRSHSPPTDGTSKRLKDIEKFIRLESAFKESRAAEDRKRKPMDSIGGESMPIPTIDTARKKRLPSKELPDSSSPVPANNIRVIKNSIRLTLNR.

K2 is subject to N6-acetyllysine. Position 23 is a phosphoserine (S23). ATP contacts are provided by residues 99–101 (FGS), T108, 112–114 (DID), D166, K227, Y236, and 245–246 (GV). Mg(2+) contacts are provided by D112, D114, and D166. The disordered stretch occupies residues 506 to 566 (KSLSDVSRSS…PTGEIERSSA (61 aa)). Polar residues-rich tracts occupy residues 509–531 (SDVSRSSGGLQSKRSSLDSTCLD) and 538–556 (SGTPFNSPVSANKPSNPDS). S524 carries the phosphoserine modification. 2 positions are modified to phosphoserine: S602 and S651. T657 is subject to Phosphothreonine. The span at 677–688 (SRAAEDRKRKPM) shows a compositional bias: basic and acidic residues. Positions 677–725 (SRAAEDRKRKPMDSIGGESMPIPTIDTARKKRLPSKELPDSSSPVPANN) are disordered. Phosphoserine is present on S711.

It belongs to the poly(A) polymerase family. Mg(2+) is required as a cofactor. Mn(2+) serves as cofactor.

The protein resides in the nucleus. The enzyme catalyses RNA(n) + ATP = RNA(n)-3'-adenine ribonucleotide + diphosphate. In terms of biological role, responsible for the post-transcriptional adenylation of the 3'-terminal of mRNA precursors and several small RNAs including signal recognition particle (SRP) RNA, nuclear 7SK RNA, U2 small nuclear RNA, and ribosomal 5S RNA. This is Poly(A) polymerase gamma (Papolg) from Mus musculus (Mouse).